The following is a 116-amino-acid chain: Fluoride-specific ion channel FluC 1 (116 aa).

4 helical membrane passes run 1 to 21 (MGKL…RYTV), 31 to 51 (IPAG…FLTF), 58 to 78 (MVYL…TFAY), and 92 to 112 (FFLN…IAYL). Na(+)-binding residues include G68 and T71.

The protein belongs to the fluoride channel Fluc/FEX (TC 1.A.43) family.

Its subcellular location is the cell membrane. The enzyme catalyses fluoride(in) = fluoride(out). Na(+) is not transported, but it plays an essential structural role and its presence is essential for fluoride channel function. In terms of biological role, fluoride-specific ion channel. Important for reducing fluoride concentration in the cell, thus reducing its toxicity. This Methanosarcina barkeri (strain Fusaro / DSM 804) protein is Fluoride-specific ion channel FluC 1.